A 139-amino-acid polypeptide reads, in one-letter code: Small ribosomal subunit protein uS11 (139 aa).

The tract at residues 117-139 (VEDVTPIPHDGTRPKGGRRGRRV) is disordered.

This sequence belongs to the universal ribosomal protein uS11 family. Part of the 30S ribosomal subunit.

Functionally, located on the platform of the 30S subunit. This is Small ribosomal subunit protein uS11 from Thermococcus onnurineus (strain NA1).